A 626-amino-acid polypeptide reads, in one-letter code: Glucoamylase (626 aa).

The N-terminal stretch at 1 to 19 (MHLVSSLLVVGAAFQAVLG) is a signal peptide. Positions 20–35 (LPDPLHEKRHSDIIKR) are excised as a propeptide. An N-linked (GlcNAc...) asparagine glycan is attached at N106. A substrate-binding site is contributed by W155. N-linked (GlcNAc...) asparagine glycosylation occurs at N206. Residue D211 is the Proton acceptor of the active site. The active-site Proton donor is E214. Residue N217 is glycosylated (N-linked (GlcNAc...) asparagine). Residues 520-626 (CAADHEVLVT…STATLDDTWR (107 aa)) enclose the CBM20 domain.

It belongs to the glycosyl hydrolase 15 family.

It carries out the reaction Hydrolysis of terminal (1-&gt;4)-linked alpha-D-glucose residues successively from non-reducing ends of the chains with release of beta-D-glucose.. The chain is Glucoamylase (gla-1) from Neurospora crassa (strain ATCC 24698 / 74-OR23-1A / CBS 708.71 / DSM 1257 / FGSC 987).